The chain runs to 145 residues: Ribonuclease H (145 aa).

An RNase H type-1 domain is found at Met-1–Asp-141. Residues Asp-9, Glu-47, Asp-69, and Asp-133 each coordinate Mg(2+).

Belongs to the RNase H family. Monomer. It depends on Mg(2+) as a cofactor.

The protein resides in the cytoplasm. The enzyme catalyses Endonucleolytic cleavage to 5'-phosphomonoester.. Endonuclease that specifically degrades the RNA of RNA-DNA hybrids. The protein is Ribonuclease H of Hydrogenovibrio crunogenus (strain DSM 25203 / XCL-2) (Thiomicrospira crunogena).